A 369-amino-acid chain; its full sequence is UDP-N-acetylglucosamine--N-acetylmuramyl-(pentapeptide) pyrophosphoryl-undecaprenol N-acetylglucosamine transferase (369 aa).

UDP-N-acetyl-alpha-D-glucosamine is bound by residues 16-18 (TGG), asparagine 130, arginine 171, serine 203, isoleucine 253, and glutamine 298.

Belongs to the glycosyltransferase 28 family. MurG subfamily.

The protein resides in the cell inner membrane. It catalyses the reaction di-trans,octa-cis-undecaprenyl diphospho-N-acetyl-alpha-D-muramoyl-L-alanyl-D-glutamyl-meso-2,6-diaminopimeloyl-D-alanyl-D-alanine + UDP-N-acetyl-alpha-D-glucosamine = di-trans,octa-cis-undecaprenyl diphospho-[N-acetyl-alpha-D-glucosaminyl-(1-&gt;4)]-N-acetyl-alpha-D-muramoyl-L-alanyl-D-glutamyl-meso-2,6-diaminopimeloyl-D-alanyl-D-alanine + UDP + H(+). It functions in the pathway cell wall biogenesis; peptidoglycan biosynthesis. In terms of biological role, cell wall formation. Catalyzes the transfer of a GlcNAc subunit on undecaprenyl-pyrophosphoryl-MurNAc-pentapeptide (lipid intermediate I) to form undecaprenyl-pyrophosphoryl-MurNAc-(pentapeptide)GlcNAc (lipid intermediate II). This Cytophaga hutchinsonii (strain ATCC 33406 / DSM 1761 / CIP 103989 / NBRC 15051 / NCIMB 9469 / D465) protein is UDP-N-acetylglucosamine--N-acetylmuramyl-(pentapeptide) pyrophosphoryl-undecaprenol N-acetylglucosamine transferase.